A 145-amino-acid polypeptide reads, in one-letter code: Large ribosomal subunit protein uL15 (145 aa).

The tract at residues 1-52 is disordered; sequence MFNLLKPKGASKRRKIVGRGPGSGLGKTSGRGQKGQKARNTSPRLGFEGGQT. The span at 19-33 shows a compositional bias: gly residues; the sequence is RGPGSGLGKTSGRGQ.

This sequence belongs to the universal ribosomal protein uL15 family. Part of the 50S ribosomal subunit.

Its function is as follows. Binds to the 23S rRNA. In Borreliella burgdorferi (strain ATCC 35210 / DSM 4680 / CIP 102532 / B31) (Borrelia burgdorferi), this protein is Large ribosomal subunit protein uL15.